Reading from the N-terminus, the 215-residue chain is Outer-membrane lipoprotein LolB (215 aa).

An N-terminal signal peptide occupies residues 1-19 (MSKLRKITSLIFLTIIMVG). Cysteine 20 is lipidated: N-palmitoyl cysteine. Cysteine 20 is lipidated: S-diacylglycerol cysteine.

The protein belongs to the LolB family. In terms of assembly, monomer.

The protein localises to the cell outer membrane. Functionally, plays a critical role in the incorporation of lipoproteins in the outer membrane after they are released by the LolA protein. This chain is Outer-membrane lipoprotein LolB, found in Vibrio atlanticus (strain LGP32) (Vibrio splendidus (strain Mel32)).